Here is a 688-residue protein sequence, read N- to C-terminus: Glycine--tRNA ligase beta subunit (688 aa).

Belongs to the class-II aminoacyl-tRNA synthetase family. In terms of assembly, tetramer of two alpha and two beta subunits.

It is found in the cytoplasm. The enzyme catalyses tRNA(Gly) + glycine + ATP = glycyl-tRNA(Gly) + AMP + diphosphate. This chain is Glycine--tRNA ligase beta subunit, found in Listeria monocytogenes serotype 4b (strain CLIP80459).